The sequence spans 984 residues: Putative formate dehydrogenase SAUSA300_2258 (984 aa).

A 2Fe-2S ferredoxin-type domain is found at 3 to 79 (EHLVVTLDGK…PMTVNTVNND (77 aa)). C37, C48, C51, and C63 together coordinate [2Fe-2S] cluster. One can recognise a 4Fe-4S His(Cys)3-ligated-type domain in the interval 79–119 (DVKDAQKEALDRILEKHMLYCTVCDYNNGDCEIHNTMDAWG). [4Fe-4S] cluster-binding residues include H95, C99, C102, C109, C147, C150, C153, C157, C190, C193, C196, C200, C264, C267, C271, and C299. 4Fe-4S ferredoxin-type domains follow at residues 138–165 (PFYR…VNET) and 181–211 (NDVP…VNME). Residues 252 to 984 (MRKERIKKTK…YVFPGNQVDK (733 aa)) form a formate dehydrogenase region. Residues 257–313 (IKKTKTVCTYCGVGCSFEVWTKDREILKVQPSHDSPANKIATCVKGKFSWGHINSDQ) form the 4Fe-4S Mo/W bis-MGD-type domain.

The protein in the C-terminal section; belongs to the prokaryotic molybdopterin-containing oxidoreductase family. Requires [2Fe-2S] cluster as cofactor. [4Fe-4S] cluster serves as cofactor. Mo-bis(molybdopterin guanine dinucleotide) is required as a cofactor.

The enzyme catalyses formate + NAD(+) = CO2 + NADH. The protein is Putative formate dehydrogenase SAUSA300_2258 of Staphylococcus aureus (strain USA300).